A 72-amino-acid polypeptide reads, in one-letter code: Disintegrin batroxostatin (72 aa).

In terms of domain architecture, Disintegrin spans 1-72 (EAGEECDCGA…SADCPRNRFY (72 aa)). 6 cysteine pairs are disulfide-bonded: cysteine 6/cysteine 21, cysteine 8/cysteine 16, cysteine 15/cysteine 38, cysteine 29/cysteine 35, cysteine 34/cysteine 59, and cysteine 47/cysteine 66. A Cell attachment site motif is present at residues 51-53 (RGD). Residues 52–72 (GDNPDDRCTGQSADCPRNRFY) are disordered.

This sequence belongs to the venom metalloproteinase (M12B) family. P-II subfamily. P-IIa sub-subfamily. Monomer. As to expression, expressed by the venom gland.

The protein resides in the secreted. In terms of biological role, inhibits fibrinogen interaction with platelets. Acts by binding to the glycoprotein IIb-IIIa receptor (ITGA2B/ITGB3) on the platelet surface and inhibits aggregation induced by ADP, thrombin, platelet-activating factor and collagen. Also inhibits T24 and SK-Mel-28 cell adhesion to fibronectin with IC(50) of 4.4 uM and 33 nM, respectively. The polypeptide is Disintegrin batroxostatin (Bothrops atrox (Barba amarilla)).